The following is a 4544-amino-acid chain: Prolow-density lipoprotein receptor-related protein 1 (4544 aa).

Residues M1–A19 form the signal peptide. The Extracellular portion of the chain corresponds to A20 to G4419. LDL-receptor class A domains follow at residues K25–Q66 and Q70–E110. Disulfide bonds link C27/C40, C34/C53, C47/C64, C72/C85, C79/C98, and C92/C108. One can recognise an EGF-like 1 domain in the interval L111–K149. N114 is a glycosylation site (N-linked (GlcNAc...) asparagine). 6 disulfides stabilise this stretch: C115–C124, C120–C133, C135–C148, C154–C164, C160–C173, and C175–C188. N136 carries N-linked (GlcNAc...) asparagine glycosylation. Residues D150–K189 form the EGF-like 2; calcium-binding domain. N-linked (GlcNAc...) asparagine glycans are attached at residues N185, N239, and N274. LDL-receptor class B repeat units lie at residues G292 to M334, G335 to S378, and R379 to Y422. An N-linked (GlcNAc...) asparagine glycan is attached at N357. A glycan (N-linked (GlcNAc...) asparagine) is linked at N446. An EGF-like 3 domain is found at R474–K520. 3 cysteine pairs are disulfide-bonded: C478-C493, C489-C504, and C506-C519. 4 LDL-receptor class B repeats span residues G571–G613, D614–N659, G660–A710, and G711–Y754. N729 is a glycosylation site (N-linked (GlcNAc...) (complex) asparagine). Residues G803–L843 enclose the EGF-like 4 domain. Cystine bridges form between C807–C818, C814–C827, C829–C842, C854–C866, C861–C879, C873–C890, C895–C907, C902–C920, C914–C931, C936–C948, C943–C961, C955–C971, C976–C989, C984–C1002, C996–C1011, C1015–C1027, C1022–C1040, C1034–C1051, C1062–C1075, C1069–C1088, C1082–C1097, C1104–C1118, C1112–C1131, C1125–C1140, C1145–C1159, C1152–C1172, C1166–C1182, C1185–C1196, C1192–C1206, C1208–C1221, C1227–C1237, C1233–C1246, and C1248–C1261. LDL-receptor class A domains lie at P852–Q892, H893–A933, R934–Y973, P974–H1013, H1013–N1053, G1060–G1099, H1102–S1142, and L1143–C1182. Ca(2+)-binding residues include W871, D874, D876, D878, D884, and E885. A glycan (N-linked (GlcNAc...) asparagine) is linked at N928. Residues W1032, D1035, D1037, D1039, D1045, and E1046 each coordinate Ca(2+). The N-linked (GlcNAc...) asparagine glycan is linked to N1050. Residues W1080, D1083, D1085, D1087, D1093, and E1094 each coordinate Ca(2+). N-linked (GlcNAc...) asparagine glycosylation is found at N1154 and N1155. EGF-like domains lie at D1183–Q1222 and I1223–R1262. N1195 and N1218 each carry an N-linked (GlcNAc...) asparagine glycan. LDL-receptor class B repeat units lie at residues S1309 to A1355, G1356 to D1398, G1399 to E1445, K1446 to E1490, and V1491 to S1531. N1511 carries N-linked (GlcNAc...) (complex) asparagine glycosylation. In terms of domain architecture, EGF-like 7 spans A1536 to Y1579. 3 cysteine pairs are disulfide-bonded: C1540-C1553, C1549-C1563, and C1565-C1578. Residues N1558, N1575, N1616, and N1645 are each glycosylated (N-linked (GlcNAc...) asparagine). LDL-receptor class B repeat units follow at residues Q1627–S1669, R1670–R1713, G1714–E1753, and S1754–K1798. N-linked (GlcNAc...) asparagine glycans are attached at residues N1723, N1733, N1763, and N1825. The 42-residue stretch at G1846–E1887 folds into the EGF-like 8 domain. 3 cysteine pairs are disulfide-bonded: C1850–C1861, C1857–C1871, and C1873–C1886. An N-linked (GlcNAc...) asparagine glycan is attached at N1933. LDL-receptor class B repeat units lie at residues D1934 to A1976, G1977 to K2019, G2020 to D2063, and G2064 to F2107. N1995 carries an N-linked (GlcNAc...) asparagine glycan. K2009 carries the post-translational modification N6-acetyllysine. A glycan (N-linked (GlcNAc...) asparagine) is linked at N2048. 2 N-linked (GlcNAc...) asparagine glycosylation sites follow: N2117 and N2127. The 41-residue stretch at G2155–R2195 folds into the EGF-like 9 domain. Cystine bridges form between C2159–C2170, C2166–C2180, and C2182–C2194. LDL-receptor class B repeat units follow at residues N2253–W2294, D2295–Q2343, N2344–A2388, E2389–H2431, and I2432–D2473. An N-linked (GlcNAc...) asparagine glycan is attached at N2472. One can recognise an EGF-like 10 domain in the interval E2478–R2518. Cystine bridges form between C2482–C2493, C2489–C2503, and C2505–C2517. Residue N2502 is glycosylated (N-linked (GlcNAc...) asparagine). N-linked (GlcNAc...) asparagine glycosylation is present at N2521. 7 LDL-receptor class A domains span residues S2522–S2563, R2564–K2602, T2603–A2641, T2642–G2690, P2694–K2732, K2732–G2771, and K2772–Y2814. Intrachain disulfides connect C2524/C2537, C2532/C2550, C2544/C2561, C2566/C2578, C2573/C2591, and C2585/C2600. The N-linked (GlcNAc...) asparagine glycan is linked to N2539. Residue N2601 is glycosylated (N-linked (GlcNAc...) asparagine). 15 cysteine pairs are disulfide-bonded: C2605–C2617, C2612–C2630, C2624–C2639, C2644–C2666, C2660–C2679, C2673–C2688, C2696–C2708, C2703–C2721, C2715–C2730, C2734–C2746, C2741–C2759, C2753–C2769, C2774–C2787, C2781–C2800, and C2794–C2812. N-linked (GlcNAc...) asparagine glycosylation is found at N2620 and N2638. N-linked (GlcNAc...) asparagine glycosylation is present at N2815. 3 consecutive LDL-receptor class A domains span residues S2816 to Y2855, P2856 to S2899, and H2902 to H2940. Cystine bridges form between C2818–C2830, C2825–C2843, C2837–C2853, C2858–C2870, C2865–C2884, C2878–C2897, C2904–C2917, C2912–C2930, C2924–C2939, C2944–C2956, C2952–C2965, C2967–C2980, C2986–C2996, C2992–C3005, and C3007–C3021. The N-linked (GlcNAc...) asparagine glycan is linked to N2905. The 41-residue stretch at I2941–A2981 folds into the EGF-like 11 domain. The 41-residue stretch at D2982 to K3022 folds into the EGF-like 12; calcium-binding domain. N3048 and N3089 each carry an N-linked (GlcNAc...) asparagine glycan. 5 LDL-receptor class B repeats span residues Q3069–G3113, G3114–N3156, G3157–T3200, E3201–Y3243, and V3244–L3284. N3264 carries an N-linked (GlcNAc...) asparagine glycan. In terms of domain architecture, EGF-like 13 spans P3290–V3331. Disulfide bonds link C3294–C3305, C3301–C3315, and C3317–C3330. LDL-receptor class A domains lie at S3332–E3371, F3372–I3410, H3411–E3450, V3451–Q3491, M3492–E3533, R3534–P3572, R3573–P3611, P3611–T3649, R3652–R3692, F3693–P3733, and T3739–I3778. N3333 is a glycosylation site (N-linked (GlcNAc...) asparagine). Disulfide bonds link C3334–C3346, C3341–C3359, C3353–C3369, C3374–C3386, C3381–C3399, C3393–C3408, C3413–C3426, C3420–C3439, C3433–C3448, C3453–C3466, C3460–C3479, C3473–C3489, C3494–C3507, C3501–C3520, C3514–C3531, C3536–C3548, C3543–C3561, C3555–C3570, C3575–C3587, C3582–C3600, C3594–C3609, C3613–C3625, C3620–C3638, C3632–C3647, C3654–C3666, C3661–C3679, C3673–C3690, C3695–C3709, C3703–C3722, C3716–C3731, C3741–C3754, C3749–C3767, C3761–C3776, C3785–C3798, C3792–C3807, C3809–C3822, C3828–C3838, C3834–C3847, and C3849–C3860. Residue N3488 is glycosylated (N-linked (GlcNAc...) asparagine). An N-linked (GlcNAc...) asparagine glycan is attached at N3662. EGF-like domains are found at residues K3781–Q3823 and D3824–K3861. N3788 carries N-linked (GlcNAc...) asparagine glycosylation. A glycan (N-linked (GlcNAc...) asparagine) is linked at N3839. 4 LDL-receptor class B repeats span residues G3912–I3954, G3970–R4012, G4013–N4056, and E4057–Y4101. The short motif at R3940 to R3943 is the Recognition site for proteolytical processing element. Residue N3953 is glycosylated (N-linked (GlcNAc...) asparagine). N4075 and N4125 each carry an N-linked (GlcNAc...) asparagine glycan. EGF-like domains lie at V4147–V4183, R4196–E4232, E4232–T4268, T4268–Q4304, Q4304–E4340, E4340–L4375, and S4373–E4409. Cystine bridges form between C4151/C4160, C4156/C4169, C4171/C4182, C4200/C4210, C4204/C4220, C4222/C4231, C4236/C4246, C4240/C4256, C4258/C4267, C4272/C4282, C4276/C4292, C4294/C4303, C4308/C4318, C4312/C4328, C4330/C4339, C4344/C4352, and C4347/C4363. N4179 carries an N-linked (GlcNAc...) asparagine glycan. N4278 and N4279 each carry an N-linked (GlcNAc...) asparagine glycan. N-linked (GlcNAc...) asparagine glycosylation is present at N4364. Disulfide bonds link C4365-C4374, C4377-C4387, C4381-C4397, and C4399-C4408. The chain crosses the membrane as a helical span at residues H4420 to Y4444. The Cytoplasmic portion of the chain corresponds to K4445–A4544. Residues K4445–A4544 form an interaction with MAFB region. Position 4460 is a phosphothreonine (T4460). The short motif at F4502–Y4507 is the NPXY motif element. The residue at position 4507 (Y4507) is a Phosphotyrosine. Residues S4517, S4520, and S4523 each carry the phosphoserine modification.

Belongs to the LDLR family. Heterodimer of an 85-kDa membrane-bound carboxyl subunit and a non-covalently attached 515-kDa N-terminal subunit. Intracellular domain interacts with MAFB. Found in a complex with PID1/PCLI1, LRP1 and CUBNI. Interacts with SNX17, PID1/PCLI1, PDGF and CUBN. The intracellular domain interacts with SHC1, GULP1 and DAB1. Can weakly interact (via NPXY motif) with DAB2 (via PID domain); the interaction is enhanced by tyrosine phosphorylation of the NPXY motif. Interacts with MDK; promotes neuronal survival. Interacts with LRPAP1; this interaction is followed by rapid internalization. Interacts with uPA/PLAU and PAI1/SERPINE1, either individually or in complex with each other, leading to rapid endocytosis; this interaction is abolished in the presence of LRPAP1/RAP. Also interacts with tPA/PLAT alone or in complex with SERPINE1. Interacts with the urokinase receptor PLAUR; this interaction leads to PLAUR internalization and is impaired in the presence of SORL1. Interacts with PDGFB. Interacts with TAU/MAPT, leading to endocytosis; this interaction is reduced in the presence of LRPAP1/RAP. Interacts with IGFBP3; this interaction mediates cell growth inhibition independently of IGF1. Interacts with ADGRG6. As to quaternary structure, (Microbial infection) Interacts with bacterial exotoxins. In terms of assembly, (Microbial infection) Interacts with Rift valley fever virus (RVFV) glycoprotein N; this interaction facilitates virus entry. Post-translationally, cleaved into a 85 kDa membrane-spanning subunit (LRP-85) and a 515 kDa large extracellular domain (LRP-515) that remains non-covalently associated. Gamma-secretase-dependent cleavage of LRP-85 releases the intracellular domain from the membrane. In terms of processing, the N-terminus is blocked. Phosphorylated on serine and threonine residues. Post-translationally, phosphorylated on tyrosine residues upon stimulation with PDGF. Tyrosine phosphorylation promotes interaction with SHC1. Most abundant in liver, brain and lung.

The protein localises to the cell membrane. It is found in the membrane. The protein resides in the coated pit. Its subcellular location is the cytoplasm. It localises to the nucleus. The protein localises to the golgi outpost. It is found in the cytoskeleton. The protein resides in the microtubule organizing center. Endocytic receptor involved in endocytosis and in phagocytosis of apoptotic cells. Required for early embryonic development. Involved in cellular lipid homeostasis. Involved in the plasma clearance of chylomicron remnants and activated LRPAP1 (alpha 2-macroglobulin), as well as the local metabolism of complexes between plasminogen activators and their endogenous inhibitors. Acts as an LRPAP1 alpha-2-macroglobulin receptor. Acts as TAU/MAPT receptor and controls the endocytosis of TAU/MAPT as well as its subsequent spread. May modulate cellular events, such as APP metabolism, kinase-dependent intracellular signaling, neuronal calcium signaling as well as neurotransmission. Also acts as a receptor for IGFBP3 to mediate cell growth inhibition. In terms of biological role, (Microbial infection) Functions as a receptor for Pseudomonas aeruginosa exotoxin A. The chain is Prolow-density lipoprotein receptor-related protein 1 from Homo sapiens (Human).